Reading from the N-terminus, the 339-residue chain is DNA-directed RNA polymerase subunit alpha (339 aa).

The tract at residues 1 to 233 (MVREEVAGST…DLFLPFLHAE (233 aa)) is alpha N-terminal domain (alpha-NTD). Residues 264 to 339 (KKGIPLNYIF…IDLLKNKLSF (76 aa)) are alpha C-terminal domain (alpha-CTD).

This sequence belongs to the RNA polymerase alpha chain family. In plastids the minimal PEP RNA polymerase catalytic core is composed of four subunits: alpha, beta, beta', and beta''. When a (nuclear-encoded) sigma factor is associated with the core the holoenzyme is formed, which can initiate transcription.

It localises to the plastid. The protein localises to the chloroplast. It carries out the reaction RNA(n) + a ribonucleoside 5'-triphosphate = RNA(n+1) + diphosphate. Its function is as follows. DNA-dependent RNA polymerase catalyzes the transcription of DNA into RNA using the four ribonucleoside triphosphates as substrates. The sequence is that of DNA-directed RNA polymerase subunit alpha from Psathyrostachys rupestris (Hordeum rupestre).